The chain runs to 1115 residues: Tbc2 translation factor, chloroplastic (1115 aa).

Low complexity-rich tracts occupy residues 69 to 87 and 163 to 175; these read TASV…QLSS and RRAG…SGRA. Disordered stretches follow at residues 69 to 90 and 163 to 210; these read TASV…SKAL and RRAG…SSSS. Positions 176–186 are enriched in gly residues; it reads RGWGSGPGRNG. A compositionally biased stretch (low complexity) spans 187 to 210; that stretch reads SGSSSVSVNGSGSSSNGSSSSSSS. 9 tandem repeats follow at residues 483–521, 607–645, 685–723, 724–763, 764–803, 804–842, 843–880, 990–1029, and 1030–1068. The segment at 483–1068 is 9 X 38 AA approximate repeats; it reads LVLELSRARL…LRPPPEWLQA (586 aa).

As to quaternary structure, part of a 400 kDa complex which is not stably associated with RNA.

The protein localises to the plastid. It localises to the chloroplast stroma. Functionally, required for expression of the chloroplast encoded psbC mRNA, most likely for translation initiation. Interacts with the 5'-UTR of psbC. This Chlamydomonas reinhardtii (Chlamydomonas smithii) protein is Tbc2 translation factor, chloroplastic (TBC2).